The chain runs to 492 residues: Probable cobyric acid synthase (492 aa).

Residues 252 to 444 form the GATase cobBQ-type domain; the sequence is PIEVNIVKFS…FHGILENFEF (193 aa). Cysteine 330 functions as the Nucleophile in the catalytic mechanism. Histidine 436 is an active-site residue.

It belongs to the CobB/CobQ family. CobQ subfamily.

It functions in the pathway cofactor biosynthesis; adenosylcobalamin biosynthesis. Functionally, catalyzes amidations at positions B, D, E, and G on adenosylcobyrinic A,C-diamide. NH(2) groups are provided by glutamine, and one molecule of ATP is hydrogenolyzed for each amidation. This Methanococcus maripaludis (strain C7 / ATCC BAA-1331) protein is Probable cobyric acid synthase.